A 405-amino-acid chain; its full sequence is uncharacterized protein (405 aa).

The next 13 helical transmembrane spans lie at 19 to 39, 48 to 68, 85 to 105, 106 to 126, 129 to 149, 156 to 176, 178 to 198, 224 to 244, 252 to 272, 283 to 303, 309 to 329, 344 to 364, and 366 to 386; these read IVSI…PLAV, MGFS…ATLL, IVVF…LADI, ASAW…ILGI, SFAG…LHIG, GIVT…CYAW, GLQG…LLAL, GMAL…ITLF, GAAF…LLFP, VAMI…TAAM, IGVL…GVVA, TYTV…GLVM, and WAGV…ALLL.

Belongs to the major facilitator superfamily. YhhS family.

The protein localises to the cell inner membrane. This is an uncharacterized protein from Salmonella paratyphi C (strain RKS4594).